The following is a 564-amino-acid chain: Serine/threonine-protein kinase PknA (564 aa).

The 263-residue stretch at 9–271 (YRVIKTLGSG…TAREMLEALQ (263 aa)) folds into the Protein kinase domain. Residues 15-23 (LGSGGFGET) and K40 each bind ATP. Catalysis depends on D139, which acts as the Proton acceptor. Positions 360-406 (QPVTQTTSLPSETTISNNDTPTVEPSPTDTPETPISQTVTQDPTPQA) are enriched in polar residues. A disordered region spans residues 360–458 (QPVTQTTSLP…PVEATDRPSP (99 aa)). Over residues 428 to 445 (TTEPTTSVPQPTTPSEPQ) the composition is skewed to low complexity.

Belongs to the protein kinase superfamily. Ser/Thr protein kinase family.

The enzyme catalyses L-seryl-[protein] + ATP = O-phospho-L-seryl-[protein] + ADP + H(+). It carries out the reaction L-threonyl-[protein] + ATP = O-phospho-L-threonyl-[protein] + ADP + H(+). In terms of biological role, probably required for both normal cellular growth and differentiation. Inactivation of pknA leads to colonies that appear light green and rough in the absence of combined nitrogen. The polypeptide is Serine/threonine-protein kinase PknA (pknA) (Nostoc sp. (strain PCC 7120 / SAG 25.82 / UTEX 2576)).